Here is a 639-residue protein sequence, read N- to C-terminus: tRNA uridine 5-carboxymethylaminomethyl modification enzyme MnmG (639 aa).

FAD contacts are provided by residues 13-18, Val-125, and Ser-180; that span reads GGGHAG. 273–287 contacts NAD(+); it reads GPRYCPSIEDKVVRF. FAD is bound at residue Gln-370. The tract at residues 620-639 is disordered; that stretch reads KRQGGNGPQSPRPDDGRARA.

The protein belongs to the MnmG family. As to quaternary structure, homodimer. Heterotetramer of two MnmE and two MnmG subunits. It depends on FAD as a cofactor.

Its subcellular location is the cytoplasm. In terms of biological role, NAD-binding protein involved in the addition of a carboxymethylaminomethyl (cmnm) group at the wobble position (U34) of certain tRNAs, forming tRNA-cmnm(5)s(2)U34. The protein is tRNA uridine 5-carboxymethylaminomethyl modification enzyme MnmG of Thioalkalivibrio sulfidiphilus (strain HL-EbGR7).